A 149-amino-acid polypeptide reads, in one-letter code: MKVLLLEDVKNLGKAGEVCEVKDGYGNNFLIANQKAKLATNEVINKYKAEVKKKAEKEALEKAQKLQMVETLQTITLTIHKKVGANGSLFGAITKEEITERLKEQHASLNLDKKDIELKHPIKSTGIYEIEVKLGFGVVGTFKIDVVAE.

The protein belongs to the bacterial ribosomal protein bL9 family.

In terms of biological role, binds to the 23S rRNA. The chain is Large ribosomal subunit protein bL9 from Helicobacter pylori (strain G27).